Reading from the N-terminus, the 162-residue chain is Disulfide bond formation protein B (162 aa).

Topologically, residues 1–8 (MTPLFRKA) are cytoplasmic. A helical transmembrane segment spans residues 9-25 (VWLLFAVSVCAFAGSLA). Residues 26–43 (AQYVLGMEPCVLCISQRL) lie on the Periplasmic side of the membrane. The cysteines at positions 35 and 38 are disulfide-linked. The helical transmembrane segment at 44-60 (CVLATALCAAIVLMCRP) threads the bilayer. Over 61-67 (RRKAGGL) the chain is Cytoplasmic. Residues 68 to 85 (FGAVFISIPAVTGISVAA) traverse the membrane as a helical segment. Over 86–141 (YQLWLQSLPPGTAPSCGAPWTFRLKGWPLFDWFEPVVRGFGNCAEPDYLLGVALPV) the chain is Periplasmic. Cys101 and Cys128 are joined by a disulfide. A helical transmembrane segment spans residues 142–160 (WSVAYFLAVALTVWWAWAR). Topologically, residues 161-162 (AK) are cytoplasmic.

It belongs to the DsbB family.

It localises to the cell inner membrane. In terms of biological role, required for disulfide bond formation in some periplasmic proteins. Acts by oxidizing the DsbA protein. In Neisseria meningitidis serogroup A / serotype 4A (strain DSM 15465 / Z2491), this protein is Disulfide bond formation protein B.